Here is a 97-residue protein sequence, read N- to C-terminus: Co-chaperonin GroES (97 aa).

It belongs to the GroES chaperonin family. In terms of assembly, heptamer of 7 subunits arranged in a ring. Interacts with the chaperonin GroEL.

It is found in the cytoplasm. Its function is as follows. Together with the chaperonin GroEL, plays an essential role in assisting protein folding. The GroEL-GroES system forms a nano-cage that allows encapsulation of the non-native substrate proteins and provides a physical environment optimized to promote and accelerate protein folding. GroES binds to the apical surface of the GroEL ring, thereby capping the opening of the GroEL channel. The chain is Co-chaperonin GroES from Oleispira antarctica.